A 294-amino-acid polypeptide reads, in one-letter code: Nucleotide-binding protein CLJ_B3680 (294 aa).

Glycine 8 to threonine 15 serves as a coordination point for ATP. Residue aspartate 59 to glycine 62 participates in GTP binding.

This sequence belongs to the RapZ-like family.

Functionally, displays ATPase and GTPase activities. This chain is Nucleotide-binding protein CLJ_B3680, found in Clostridium botulinum (strain 657 / Type Ba4).